The sequence spans 546 residues: Chaperonin GroEL (546 aa).

ATP is bound by residues T30–P33, K51, D87–T91, G415, N479–A481, and D495. The interval E527–M546 is disordered. Positions G537 to M546 are enriched in gly residues.

It belongs to the chaperonin (HSP60) family. Forms a cylinder of 14 subunits composed of two heptameric rings stacked back-to-back. Interacts with the co-chaperonin GroES.

It is found in the cytoplasm. It catalyses the reaction ATP + H2O + a folded polypeptide = ADP + phosphate + an unfolded polypeptide.. Its function is as follows. Together with its co-chaperonin GroES, plays an essential role in assisting protein folding. The GroEL-GroES system forms a nano-cage that allows encapsulation of the non-native substrate proteins and provides a physical environment optimized to promote and accelerate protein folding. This Baumannia cicadellinicola subsp. Homalodisca coagulata protein is Chaperonin GroEL.